Consider the following 358-residue polypeptide: Adenosine deaminase (358 aa).

Residues His14 and His16 each contribute to the Zn(2+) site. 3 residues coordinate substrate: His16, Asp18, and Gly183. His212 is a binding site for Zn(2+). The active-site Proton donor is Glu215. Asp294 contributes to the Zn(2+) binding site. A substrate-binding site is contributed by Asp295.

Belongs to the metallo-dependent hydrolases superfamily. Adenosine and AMP deaminases family. The cofactor is Zn(2+).

The protein localises to the cell membrane. Its subcellular location is the cell junction. It is found in the cytoplasmic vesicle lumen. The protein resides in the cytoplasm. It localises to the lysosome. It catalyses the reaction adenosine + H2O + H(+) = inosine + NH4(+). The enzyme catalyses 2'-deoxyadenosine + H2O + H(+) = 2'-deoxyinosine + NH4(+). In terms of biological role, catalyzes the hydrolytic deamination of adenosine and 2-deoxyadenosine. Plays an important role in purine metabolism and in adenosine homeostasis. Modulates signaling by extracellular adenosine, and so contributes indirectly to cellular signaling events. May act as a positive regulator of T-cell coactivation. In Xenopus laevis (African clawed frog), this protein is Adenosine deaminase (ada).